We begin with the raw amino-acid sequence, 335 residues long: Probable deoxyhypusine synthase (335 aa).

Lys-308 (nucleophile) is an active-site residue.

The protein belongs to the deoxyhypusine synthase family. It depends on NAD(+) as a cofactor.

It catalyses the reaction [eIF5A protein]-L-lysine + spermidine = [eIF5A protein]-deoxyhypusine + propane-1,3-diamine. The protein operates within protein modification; eIF5A hypusination. Functionally, catalyzes the NAD-dependent oxidative cleavage of spermidine and the subsequent transfer of the butylamine moiety of spermidine to the epsilon-amino group of a specific lysine residue of the eIF-5A precursor protein to form the intermediate deoxyhypusine residue. This is Probable deoxyhypusine synthase from Thermococcus onnurineus (strain NA1).